We begin with the raw amino-acid sequence, 274 residues long: Large ribosomal subunit protein uL2 (274 aa).

Disordered stretches follow at residues 30–54 and 223–274; these read EKSL…IRHK and VAMN…QLKG. A compositionally biased stretch (low complexity) spans 36–48; it reads GKKSSGGRNNNGR. Residues 263–274 are compositionally biased toward basic and acidic residues; it reads KFSDKYIKQLKG.

Belongs to the universal ribosomal protein uL2 family. In terms of assembly, part of the 50S ribosomal subunit. Forms a bridge to the 30S subunit in the 70S ribosome.

One of the primary rRNA binding proteins. Required for association of the 30S and 50S subunits to form the 70S ribosome, for tRNA binding and peptide bond formation. It has been suggested to have peptidyltransferase activity; this is somewhat controversial. Makes several contacts with the 16S rRNA in the 70S ribosome. In Wolbachia sp. subsp. Brugia malayi (strain TRS), this protein is Large ribosomal subunit protein uL2.